Consider the following 118-residue polypeptide: Ribosome-binding factor A (118 aa).

This sequence belongs to the RbfA family. In terms of assembly, monomer. Binds 30S ribosomal subunits, but not 50S ribosomal subunits or 70S ribosomes.

It is found in the cytoplasm. Its function is as follows. One of several proteins that assist in the late maturation steps of the functional core of the 30S ribosomal subunit. Associates with free 30S ribosomal subunits (but not with 30S subunits that are part of 70S ribosomes or polysomes). Required for efficient processing of 16S rRNA. May interact with the 5'-terminal helix region of 16S rRNA. This Bacillus anthracis (strain A0248) protein is Ribosome-binding factor A.